Here is a 180-residue protein sequence, read N- to C-terminus: ATP-dependent protease subunit HslV (180 aa).

Threonine 2 is a catalytic residue. Residues glycine 157, cysteine 160, and threonine 163 each coordinate Na(+).

Belongs to the peptidase T1B family. HslV subfamily. As to quaternary structure, a double ring-shaped homohexamer of HslV is capped on each side by a ring-shaped HslU homohexamer. The assembly of the HslU/HslV complex is dependent on binding of ATP.

The protein localises to the cytoplasm. The enzyme catalyses ATP-dependent cleavage of peptide bonds with broad specificity.. Its activity is regulated as follows. Allosterically activated by HslU binding. Functionally, protease subunit of a proteasome-like degradation complex believed to be a general protein degrading machinery. The sequence is that of ATP-dependent protease subunit HslV from Tolumonas auensis (strain DSM 9187 / NBRC 110442 / TA 4).